A 192-amino-acid polypeptide reads, in one-letter code: MNTQDVINIFKQADAILEGHFILTSGRHSATFLQKAKVFMHADLTEKLCRGLAQEIKRHVEGKIDYVVGPAIGGLIPSYETSRHLGVPSIWVERENGVFRLRRFEVEKGARVVIVEDIVTTGLSIRETIEALVAVEADVVASACIIDRSGGKVDVGVPLIALAEYEIVSYTRDTLPHELSKIPAVKPGSRDI.

Residue 116–124 coordinates 5-phospho-alpha-D-ribose 1-diphosphate; sequence EDIVTTGLS. The orotate site is built by Thr120 and Arg148.

The protein belongs to the purine/pyrimidine phosphoribosyltransferase family. PyrE subfamily. Homodimer. Mg(2+) serves as cofactor.

The enzyme catalyses orotidine 5'-phosphate + diphosphate = orotate + 5-phospho-alpha-D-ribose 1-diphosphate. The protein operates within pyrimidine metabolism; UMP biosynthesis via de novo pathway; UMP from orotate: step 1/2. Its function is as follows. Catalyzes the transfer of a ribosyl phosphate group from 5-phosphoribose 1-diphosphate to orotate, leading to the formation of orotidine monophosphate (OMP). The chain is Orotate phosphoribosyltransferase from Bartonella bacilliformis (strain ATCC 35685 / KC583 / Herrer 020/F12,63).